Reading from the N-terminus, the 136-residue chain is Large ribosomal subunit protein uL22 (136 aa).

This sequence belongs to the universal ribosomal protein uL22 family. In terms of assembly, part of the 50S ribosomal subunit.

Its function is as follows. This protein binds specifically to 23S rRNA; its binding is stimulated by other ribosomal proteins, e.g. L4, L17, and L20. It is important during the early stages of 50S assembly. It makes multiple contacts with different domains of the 23S rRNA in the assembled 50S subunit and ribosome. The globular domain of the protein is located near the polypeptide exit tunnel on the outside of the subunit, while an extended beta-hairpin is found that lines the wall of the exit tunnel in the center of the 70S ribosome. This is Large ribosomal subunit protein uL22 from Bacteroides fragilis (strain YCH46).